Reading from the N-terminus, the 115-residue chain is uncharacterized protein (115 aa).

This is an uncharacterized protein from Spirochaeta aurantia.